We begin with the raw amino-acid sequence, 365 residues long: 25S rRNA (uridine(2843)-N(3))-methyltransferase (365 aa).

This sequence belongs to the class I-like SAM-binding methyltransferase superfamily.

It is found in the cytoplasm. The protein localises to the nucleus. It catalyses the reaction uridine(2843) in 25S rRNA + S-adenosyl-L-methionine = N(3)-methyluridine(2843) in 25S rRNA + S-adenosyl-L-homocysteine + H(+). Functionally, S-adenosyl-L-methionine-dependent methyltransferase that specifically methylates the N(3) position of uridine 2843 (m3U2843) in 25S rRNA. This chain is 25S rRNA (uridine(2843)-N(3))-methyltransferase (BMT6), found in Saccharomyces cerevisiae (strain ATCC 204508 / S288c) (Baker's yeast).